The following is a 107-amino-acid chain: Probable antitoxin TacA (107 aa).

The protein belongs to the TacA antitoxin family. Forms a complex with cognate antitoxin TacT.

In terms of biological role, probable antitoxin component of a type II toxin-antitoxin (TA) system. Should neutralize cognate toxin TacT (y4aS). In Sinorhizobium fredii (strain NBRC 101917 / NGR234), this protein is Probable antitoxin TacA.